A 243-amino-acid polypeptide reads, in one-letter code: Probable transcriptional regulatory protein LCA_1307 (243 aa).

Residues 1-21 (MSGHSKWHNIQGRKNAQDAKR) form a disordered region.

It belongs to the TACO1 family.

The protein resides in the cytoplasm. This is Probable transcriptional regulatory protein LCA_1307 from Latilactobacillus sakei subsp. sakei (strain 23K) (Lactobacillus sakei subsp. sakei).